The chain runs to 378 residues: MDFYRPLLRPLLLSQLNVDPEWLTRNALGFLATLARSRSPLAANLRSYLRQTYGFQDPRLAMSLWGLTFATPVGLAAGFDKDGIAAPLWSDLGFGFAELGTVTALAQPGNPRPRLFRIPQDLAAFNRMGFNNASAEALADTLRGYFPEGQRSIPIGINLGKSKLTPLSGAVSDYVSSFRSLRSLGDYFVVNVSSPNTPGLRSLQAVTELEPILAALQAENTEQRPLLLKIAPDLVDEEVVAIAHLAQRQQLAGIIATNTTIDKSLLSVEHLPGRREPLATEAGGISGAPLRSRSTEVIRLLHRTTQGQLPIIGVGGIFSAEDAWQKIVAGASLVQVYTGWVYEGPLLVKTIQQGLLERLDSAGLPNLAAAVGSAAIDS.

Residues 77 to 81 and threonine 101 contribute to the FMN site; that span reads AGFDK. A substrate-binding site is contributed by lysine 81. Substrate is bound at residue 126–130; it reads NRMGF. Residues asparagine 158 and asparagine 191 each coordinate FMN. Position 191 (asparagine 191) interacts with substrate. The Nucleophile role is filled by serine 194. Asparagine 196 is a substrate binding site. 2 residues coordinate FMN: lysine 229 and threonine 257. Residue 258–259 coordinates substrate; it reads NT. FMN contacts are provided by residues glycine 287, glycine 316, and 337–338; that span reads YT.

It belongs to the dihydroorotate dehydrogenase family. Type 2 subfamily. Monomer. FMN is required as a cofactor.

It is found in the cell membrane. The enzyme catalyses (S)-dihydroorotate + a quinone = orotate + a quinol. It functions in the pathway pyrimidine metabolism; UMP biosynthesis via de novo pathway; orotate from (S)-dihydroorotate (quinone route): step 1/1. Functionally, catalyzes the conversion of dihydroorotate to orotate with quinone as electron acceptor. This Synechococcus sp. (strain ATCC 27144 / PCC 6301 / SAUG 1402/1) (Anacystis nidulans) protein is Dihydroorotate dehydrogenase (quinone).